A 634-amino-acid polypeptide reads, in one-letter code: DNA-directed RNA polymerase subunit gamma (634 aa).

Zn(2+) contacts are provided by Cys74, Cys76, Cys89, and Cys92. Mg(2+) contacts are provided by Asp471, Asp473, and Asp475.

The protein belongs to the RNA polymerase beta' chain family. RpoC1 subfamily. In terms of assembly, in cyanobacteria the RNAP catalytic core is composed of 2 alpha, 1 beta, 1 beta', 1 gamma and 1 omega subunit. When a sigma factor is associated with the core the holoenzyme is formed, which can initiate transcription. Mg(2+) serves as cofactor. It depends on Zn(2+) as a cofactor.

The catalysed reaction is RNA(n) + a ribonucleoside 5'-triphosphate = RNA(n+1) + diphosphate. DNA-dependent RNA polymerase catalyzes the transcription of DNA into RNA using the four ribonucleoside triphosphates as substrates. The sequence is that of DNA-directed RNA polymerase subunit gamma from Prochlorococcus marinus (strain MIT 9515).